A 553-amino-acid chain; its full sequence is Keratin, type II cytoskeletal 73 (553 aa).

The head stretch occupies residues 1–130 (MNRQFTCKSG…DPEIQKVRAQ (130 aa)). Residues 131–166 (EREQIKALNNKFASFIDKVRFLEQQNQVLQTKWELL) are coil 1A. The 314-residue stretch at 131-444 (EREQIKALNN…KLLEGEECRM (314 aa)) folds into the IF rod domain. The tract at residues 167 to 185 (QQLDLSNCRRNLEPVYEAH) is linker 1. Residues 186-277 (ISSLQKQLDS…CLYEGEITQM (92 aa)) are coil 1B. Positions 278-301 (QSHISDTSVVLSMDNNRNLDLDSI) are linker 12. The interval 302–440 (IAEVRAQYED…ATYRKLLEGE (139 aa)) is coil 2. The interval 441–539 (ECRMSGEHTN…LGSPSKKTMR (99 aa)) is tail.

This sequence belongs to the intermediate filament family. In terms of assembly, heterotetramer of two type I and two type II keratins.

Has a role in hair formation. Specific component of keratin intermediate filaments in the inner root sheath (IRS) of the hair follicle. This Rattus norvegicus (Rat) protein is Keratin, type II cytoskeletal 73 (Krt73).